Consider the following 468-residue polypeptide: Ribulose bisphosphate carboxylase large chain (468 aa).

K5 carries the N6,N6,N6-trimethyllysine modification. N114 and T164 together coordinate substrate. Catalysis depends on K166, which acts as the Proton acceptor. Position 168 (K168) interacts with substrate. Positions 192, 194, and 195 each coordinate Mg(2+). K192 is subject to N6-carboxylysine. Catalysis depends on H285, which acts as the Proton acceptor. Substrate contacts are provided by R286, H318, and S370.

This sequence belongs to the RuBisCO large chain family. Type I subfamily. As to quaternary structure, heterohexadecamer of 8 large chains and 8 small chains; disulfide-linked. The disulfide link is formed within the large subunit homodimers. Requires Mg(2+) as cofactor. Post-translationally, the disulfide bond which can form in the large chain dimeric partners within the hexadecamer appears to be associated with oxidative stress and protein turnover.

It localises to the plastid. Its subcellular location is the chloroplast. It carries out the reaction 2 (2R)-3-phosphoglycerate + 2 H(+) = D-ribulose 1,5-bisphosphate + CO2 + H2O. The enzyme catalyses D-ribulose 1,5-bisphosphate + O2 = 2-phosphoglycolate + (2R)-3-phosphoglycerate + 2 H(+). Its function is as follows. RuBisCO catalyzes two reactions: the carboxylation of D-ribulose 1,5-bisphosphate, the primary event in carbon dioxide fixation, as well as the oxidative fragmentation of the pentose substrate in the photorespiration process. Both reactions occur simultaneously and in competition at the same active site. This is Ribulose bisphosphate carboxylase large chain from Nolana spathulata (Chilean bell flower).